The chain runs to 365 residues: MSSSFGKIFRVSTFGESHGGAVGVILDGCPPKLKVDINMIQNELDRRRPGQSDITTPRNEEDKIEILSGIKEGLTLGTPIAMLVRNKDQRPRDYDNLDQVFRPSHADGTYHLKYGIQASSGGGRASARETIGRVAAGAVAKQLLKNFCNTEILSWVKRIHDIDSDINKEKISLNKIDSNIVRCPDEKISAEMIERIKQLKRQGDSCGGVIECLVKNVPSGLGMPVFDKLEADLAKALMSLPATKGFEIGSGFSGTYLKGSEHNDAFIKSDDIRKLRTISNNSGGIQGGISNGENIEMKIAFKPTATIGKEQKTVNAEGKEVLMRAKGRHDPCVLPRAVPMVDAMVALVLVDHLLLNQAQCGLIDN.

Arg-47 is an NADP(+) binding site. FMN-binding positions include 124-126 (RAS), Gly-287, 302-306 (KPTAT), and Arg-328.

This sequence belongs to the chorismate synthase family. As to quaternary structure, homotetramer. The cofactor is FMNH2.

It catalyses the reaction 5-O-(1-carboxyvinyl)-3-phosphoshikimate = chorismate + phosphate. The protein operates within metabolic intermediate biosynthesis; chorismate biosynthesis; chorismate from D-erythrose 4-phosphate and phosphoenolpyruvate: step 7/7. Functionally, catalyzes the anti-1,4-elimination of the C-3 phosphate and the C-6 proR hydrogen from 5-enolpyruvylshikimate-3-phosphate (EPSP) to yield chorismate, which is the branch point compound that serves as the starting substrate for the three terminal pathways of aromatic amino acid biosynthesis. This reaction introduces a second double bond into the aromatic ring system. The sequence is that of Chorismate synthase from Prochlorococcus marinus (strain MIT 9215).